Here is a 314-residue protein sequence, read N- to C-terminus: Homoserine kinase (314 aa).

95–105 (PHSRGLGSSAA) lines the ATP pocket.

Belongs to the GHMP kinase family. Homoserine kinase subfamily.

Its subcellular location is the cytoplasm. The enzyme catalyses L-homoserine + ATP = O-phospho-L-homoserine + ADP + H(+). The protein operates within amino-acid biosynthesis; L-threonine biosynthesis; L-threonine from L-aspartate: step 4/5. In terms of biological role, catalyzes the ATP-dependent phosphorylation of L-homoserine to L-homoserine phosphate. The polypeptide is Homoserine kinase (Mycobacterium sp. (strain JLS)).